The primary structure comprises 149 residues: D-aminoacyl-tRNA deacylase (149 aa).

A Gly-cisPro motif, important for rejection of L-amino acids motif is present at residues 137–138 (GP).

This sequence belongs to the DTD family. Homodimer.

The protein resides in the cytoplasm. The enzyme catalyses glycyl-tRNA(Ala) + H2O = tRNA(Ala) + glycine + H(+). It catalyses the reaction a D-aminoacyl-tRNA + H2O = a tRNA + a D-alpha-amino acid + H(+). An aminoacyl-tRNA editing enzyme that deacylates mischarged D-aminoacyl-tRNAs. Also deacylates mischarged glycyl-tRNA(Ala), protecting cells against glycine mischarging by AlaRS. Acts via tRNA-based rather than protein-based catalysis; rejects L-amino acids rather than detecting D-amino acids in the active site. By recycling D-aminoacyl-tRNA to D-amino acids and free tRNA molecules, this enzyme counteracts the toxicity associated with the formation of D-aminoacyl-tRNA entities in vivo and helps enforce protein L-homochirality. The protein is D-aminoacyl-tRNA deacylase of Syntrophus aciditrophicus (strain SB).